A 141-amino-acid polypeptide reads, in one-letter code: ATP synthase epsilon chain (141 aa).

Belongs to the ATPase epsilon chain family. As to quaternary structure, F-type ATPases have 2 components, CF(1) - the catalytic core - and CF(0) - the membrane proton channel. CF(1) has five subunits: alpha(3), beta(3), gamma(1), delta(1), epsilon(1). CF(0) has three main subunits: a, b and c.

The protein localises to the cell inner membrane. Functionally, produces ATP from ADP in the presence of a proton gradient across the membrane. This chain is ATP synthase epsilon chain, found in Pseudomonas syringae pv. syringae (strain B728a).